Reading from the N-terminus, the 429-residue chain is Serine--tRNA ligase (429 aa).

L-serine is bound at residue 236–238 (TAE). 267–269 (RSE) serves as a coordination point for ATP. E290 is a binding site for L-serine. 354 to 357 (EVSS) is a binding site for ATP. Residue S390 coordinates L-serine.

The protein belongs to the class-II aminoacyl-tRNA synthetase family. Type-1 seryl-tRNA synthetase subfamily. As to quaternary structure, homodimer. The tRNA molecule binds across the dimer.

Its subcellular location is the cytoplasm. The catalysed reaction is tRNA(Ser) + L-serine + ATP = L-seryl-tRNA(Ser) + AMP + diphosphate + H(+). The enzyme catalyses tRNA(Sec) + L-serine + ATP = L-seryl-tRNA(Sec) + AMP + diphosphate + H(+). It participates in aminoacyl-tRNA biosynthesis; selenocysteinyl-tRNA(Sec) biosynthesis; L-seryl-tRNA(Sec) from L-serine and tRNA(Sec): step 1/1. Catalyzes the attachment of serine to tRNA(Ser). Is also able to aminoacylate tRNA(Sec) with serine, to form the misacylated tRNA L-seryl-tRNA(Sec), which will be further converted into selenocysteinyl-tRNA(Sec). The polypeptide is Serine--tRNA ligase (Wigglesworthia glossinidia brevipalpis).